Here is a 142-residue protein sequence, read N- to C-terminus: MVLSPTDKSIVKAAWEKVGAHAGDYGAEALERMFLSFPTTKTYFPQFDLSHGSAQVKGHGKKVADALTNAVLHVDDMPSALSALSDLHAHKLTVDPVNFKLLSHCLLVTLACHLPAEFTPAVHASLDKFMASVSTVLTSKYR.

The region spanning 2–142 (VLSPTDKSIV…VSTVLTSKYR (141 aa)) is the Globin domain. H59 is a binding site for O2. Position 88 (H88) interacts with heme b.

The protein belongs to the globin family. In terms of assembly, heterotetramer of two alpha chains and two beta chains. As to expression, red blood cells.

Functionally, involved in oxygen transport from the lung to the various peripheral tissues. This is Hemoglobin subunit alpha-A (HBAA) from Otolemur crassicaudatus (Brown greater galago).